A 150-amino-acid chain; its full sequence is Ribosomal RNA large subunit methyltransferase H (150 aa).

Residues A100 and 118–123 (LSEMTF) each bind S-adenosyl-L-methionine.

Belongs to the RNA methyltransferase RlmH family. As to quaternary structure, homodimer.

Its subcellular location is the cytoplasm. The enzyme catalyses pseudouridine(1915) in 23S rRNA + S-adenosyl-L-methionine = N(3)-methylpseudouridine(1915) in 23S rRNA + S-adenosyl-L-homocysteine + H(+). Specifically methylates the pseudouridine at position 1915 (m3Psi1915) in 23S rRNA. This chain is Ribosomal RNA large subunit methyltransferase H, found in Helicobacter pylori (strain P12).